The sequence spans 251 residues: Octanoyltransferase (251 aa).

The region spanning 56-241 is the BPL/LPL catalytic domain; that stretch reads ADTGDEIWVV…NLDGASAAAD (186 aa). Substrate is bound by residues 96–103, 168–170, and 181–183; these read RGGQITYH, ALG, and GLS. Catalysis depends on Cys-199, which acts as the Acyl-thioester intermediate.

The protein belongs to the LipB family.

Its subcellular location is the cytoplasm. The catalysed reaction is octanoyl-[ACP] + L-lysyl-[protein] = N(6)-octanoyl-L-lysyl-[protein] + holo-[ACP] + H(+). The protein operates within protein modification; protein lipoylation via endogenous pathway; protein N(6)-(lipoyl)lysine from octanoyl-[acyl-carrier-protein]: step 1/2. Functionally, catalyzes the transfer of endogenously produced octanoic acid from octanoyl-acyl-carrier-protein onto the lipoyl domains of lipoate-dependent enzymes. Lipoyl-ACP can also act as a substrate although octanoyl-ACP is likely to be the physiological substrate. The protein is Octanoyltransferase of Burkholderia cenocepacia (strain HI2424).